Here is a 71-residue protein sequence, read N- to C-terminus: MPSVKVRENEPFEFALRRFKRICEKAGILAETRKREFYEKPTQERKRKAAAAVKRQMRRTSRDVTKRKRLY.

Positions 39-71 (EKPTQERKRKAAAAVKRQMRRTSRDVTKRKRLY) are disordered. A compositionally biased stretch (basic residues) spans 45 to 71 (RKRKAAAAVKRQMRRTSRDVTKRKRLY).

It belongs to the bacterial ribosomal protein bS21 family.

The protein is Small ribosomal subunit protein bS21 of Xylella fastidiosa (strain M12).